Here is a 509-residue protein sequence, read N- to C-terminus: tRNA-2-methylthio-N(6)-dimethylallyladenosine synthase (509 aa).

Residues 1–20 (MNEKQKQESGQVNPADKTSE) are disordered. The region spanning 66-184 (RKFYIRTYGC…LPELLSEAYL (119 aa)) is the MTTase N-terminal domain. The [4Fe-4S] cluster site is built by cysteine 75, cysteine 111, cysteine 145, cysteine 221, cysteine 225, and cysteine 228. Residues 207 to 437 (RNGKIKGWVN…NDLVKEISAK (231 aa)) form the Radical SAM core domain. The 64-residue stretch at 440-503 (KEYEGRTVEV…TWSLDGVMAG (64 aa)) folds into the TRAM domain.

It belongs to the methylthiotransferase family. MiaB subfamily. As to quaternary structure, monomer. [4Fe-4S] cluster is required as a cofactor.

The protein resides in the cytoplasm. It catalyses the reaction N(6)-dimethylallyladenosine(37) in tRNA + (sulfur carrier)-SH + AH2 + 2 S-adenosyl-L-methionine = 2-methylsulfanyl-N(6)-dimethylallyladenosine(37) in tRNA + (sulfur carrier)-H + 5'-deoxyadenosine + L-methionine + A + S-adenosyl-L-homocysteine + 2 H(+). Functionally, catalyzes the methylthiolation of N6-(dimethylallyl)adenosine (i(6)A), leading to the formation of 2-methylthio-N6-(dimethylallyl)adenosine (ms(2)i(6)A) at position 37 in tRNAs that read codons beginning with uridine. This chain is tRNA-2-methylthio-N(6)-dimethylallyladenosine synthase, found in Bacillus velezensis (strain DSM 23117 / BGSC 10A6 / LMG 26770 / FZB42) (Bacillus amyloliquefaciens subsp. plantarum).